The primary structure comprises 150 residues: Large ribosomal subunit protein bL9 (150 aa).

This sequence belongs to the bacterial ribosomal protein bL9 family.

Functionally, binds to the 23S rRNA. The sequence is that of Large ribosomal subunit protein bL9 from Ruthia magnifica subsp. Calyptogena magnifica.